The primary structure comprises 141 residues: Nucleoside diphosphate kinase (141 aa).

Residues Lys11, Phe59, Arg87, Thr93, Arg104, and Asn114 each contribute to the ATP site. His117 functions as the Pros-phosphohistidine intermediate in the catalytic mechanism.

It belongs to the NDK family. Homotetramer. Requires Mg(2+) as cofactor.

The protein resides in the cytoplasm. The catalysed reaction is a 2'-deoxyribonucleoside 5'-diphosphate + ATP = a 2'-deoxyribonucleoside 5'-triphosphate + ADP. It catalyses the reaction a ribonucleoside 5'-diphosphate + ATP = a ribonucleoside 5'-triphosphate + ADP. Functionally, major role in the synthesis of nucleoside triphosphates other than ATP. The ATP gamma phosphate is transferred to the NDP beta phosphate via a ping-pong mechanism, using a phosphorylated active-site intermediate. This chain is Nucleoside diphosphate kinase, found in Acidovorax ebreus (strain TPSY) (Diaphorobacter sp. (strain TPSY)).